The chain runs to 436 residues: 3-ketoacyl-CoA thiolase (436 aa).

Catalysis depends on C99, which acts as the Acyl-thioester intermediate. Residues H392 and C422 each act as proton acceptor in the active site.

It belongs to the thiolase-like superfamily. Thiolase family. In terms of assembly, heterotetramer of two alpha chains (FadJ) and two beta chains (FadI).

It is found in the cytoplasm. The catalysed reaction is an acyl-CoA + acetyl-CoA = a 3-oxoacyl-CoA + CoA. Its pathway is lipid metabolism; fatty acid beta-oxidation. Catalyzes the final step of fatty acid oxidation in which acetyl-CoA is released and the CoA ester of a fatty acid two carbons shorter is formed. This is 3-ketoacyl-CoA thiolase from Alteromonas mediterranea (strain DSM 17117 / CIP 110805 / LMG 28347 / Deep ecotype).